The sequence spans 231 residues: Large ribosomal subunit protein uL1 (231 aa).

Belongs to the universal ribosomal protein uL1 family. Part of the 50S ribosomal subunit.

Functionally, binds directly to 23S rRNA. The L1 stalk is quite mobile in the ribosome, and is involved in E site tRNA release. Protein L1 is also a translational repressor protein, it controls the translation of the L11 operon by binding to its mRNA. This chain is Large ribosomal subunit protein uL1, found in Pseudomonas fluorescens (strain ATCC BAA-477 / NRRL B-23932 / Pf-5).